The sequence spans 848 residues: Adenylate cyclase (848 aa).

Residues 1–535 are catalytic; the sequence is MYLYIETLKQ…DVSHHFPLRL (535 aa). Residues 541-848 form a regulatory region; it reads KALYSPCEIR…DTPLLQQYFS (308 aa). Histidine 609 is subject to Phosphohistidine; by CRR.

Belongs to the adenylyl cyclase class-1 family.

Its subcellular location is the cytoplasm. The catalysed reaction is ATP = 3',5'-cyclic AMP + diphosphate. Its activity is regulated as follows. The regulatory domain is involved in the regulation of cyclase activity by the carbon source. Activated by the PTS system, glucose-specific IIA component (CRR). Catalyzes the formation of the second messenger cAMP from ATP. Its transcript is probably degraded by endoribonuclease LS (rnlA), decreasing cAMP levels and the negative regulator Crp-cAMP, which then induces its own transcription again. The sequence is that of Adenylate cyclase (cyaA) from Escherichia coli (strain K12).